The following is a 229-amino-acid chain: Potassium/proton antiporter CemA (229 aa).

A run of 3 helical transmembrane segments spans residues 7-27, 106-126, and 189-209; these read LTPLPYLASIVFLPWWISISF, IILHFSTNIICFAILSGYSIL, and IISGLVSTFPVILDTILKYWI.

Belongs to the CemA family.

Its subcellular location is the plastid. The protein resides in the chloroplast inner membrane. The catalysed reaction is K(+)(in) + H(+)(out) = K(+)(out) + H(+)(in). Functionally, contributes to K(+)/H(+) antiport activity by supporting proton efflux to control proton extrusion and homeostasis in chloroplasts in a light-dependent manner to modulate photosynthesis. Prevents excessive induction of non-photochemical quenching (NPQ) under continuous-light conditions. Indirectly promotes efficient inorganic carbon uptake into chloroplasts. This is Potassium/proton antiporter CemA from Liriodendron tulipifera (Tuliptree).